Here is a 719-residue protein sequence, read N- to C-terminus: Phosphoribosylformylglycinamidine synthase subunit PurL (719 aa).

The active site involves His-47. The ATP site is built by Tyr-50 and Lys-89. Glu-91 lines the Mg(2+) pocket. Residues 92–95 and Arg-114 contribute to the substrate site; that span reads SHNH. The active-site Proton acceptor is His-93. Residue Asp-115 coordinates Mg(2+). Gln-238 contributes to the substrate binding site. Asp-266 is a binding site for Mg(2+). A substrate-binding site is contributed by 310–312; the sequence is ESQ. ATP is bound by residues Asp-488 and Gly-525. Asn-526 is a binding site for Mg(2+). Ser-528 is a binding site for substrate.

This sequence belongs to the FGAMS family. In terms of assembly, monomer. Part of the FGAM synthase complex composed of 1 PurL, 1 PurQ and 2 PurS subunits.

The protein localises to the cytoplasm. The enzyme catalyses N(2)-formyl-N(1)-(5-phospho-beta-D-ribosyl)glycinamide + L-glutamine + ATP + H2O = 2-formamido-N(1)-(5-O-phospho-beta-D-ribosyl)acetamidine + L-glutamate + ADP + phosphate + H(+). The protein operates within purine metabolism; IMP biosynthesis via de novo pathway; 5-amino-1-(5-phospho-D-ribosyl)imidazole from N(2)-formyl-N(1)-(5-phospho-D-ribosyl)glycinamide: step 1/2. In terms of biological role, part of the phosphoribosylformylglycinamidine synthase complex involved in the purines biosynthetic pathway. Catalyzes the ATP-dependent conversion of formylglycinamide ribonucleotide (FGAR) and glutamine to yield formylglycinamidine ribonucleotide (FGAM) and glutamate. The FGAM synthase complex is composed of three subunits. PurQ produces an ammonia molecule by converting glutamine to glutamate. PurL transfers the ammonia molecule to FGAR to form FGAM in an ATP-dependent manner. PurS interacts with PurQ and PurL and is thought to assist in the transfer of the ammonia molecule from PurQ to PurL. This Ruegeria pomeroyi (strain ATCC 700808 / DSM 15171 / DSS-3) (Silicibacter pomeroyi) protein is Phosphoribosylformylglycinamidine synthase subunit PurL.